A 231-amino-acid chain; its full sequence is Large ribosomal subunit protein uL1 (231 aa).

The protein belongs to the universal ribosomal protein uL1 family. Part of the 50S ribosomal subunit.

Binds directly to 23S rRNA. The L1 stalk is quite mobile in the ribosome, and is involved in E site tRNA release. Its function is as follows. Protein L1 is also a translational repressor protein, it controls the translation of the L11 operon by binding to its mRNA. The sequence is that of Large ribosomal subunit protein uL1 from Francisella tularensis subsp. tularensis (strain WY96-3418).